Reading from the N-terminus, the 450-residue chain is Probable transporter MCH1 (450 aa).

12 helical membrane-spanning segments follow: residues 32 to 52 (AFLV…ISLY), 69 to 89 (VLFS…GLLS), 96 to 116 (MLSW…AWVF), 127 to 147 (VLCF…ALFT), 157 to 177 (LCSI…GSQL), 199 to 219 (LAVA…IVTM), 255 to 275 (PAAY…EMFL), 290 to 309 (VLPE…GLII), 320 to 340 (MSVQ…VVLA), 355 to 375 (LSGA…LAVW), 378 to 398 (AVFG…SILF), and 423 to 443 (VFWS…LMYL).

Belongs to the major facilitator superfamily.

Its subcellular location is the vacuole membrane. Functionally, probable transporter. In Eremothecium gossypii (strain ATCC 10895 / CBS 109.51 / FGSC 9923 / NRRL Y-1056) (Yeast), this protein is Probable transporter MCH1 (MCH1).